We begin with the raw amino-acid sequence, 238 residues long: MLVLFVATWSDLGLCKKRPKPGGWNTGGSRYPGQGSPGGNRYPPQGGGGWGQPHGGGWGQPHGGGWGQPHGGGWGQGGGTHNQWHKPSKPKTSMKHMAGAAAAGAVVGGLGGYMLGSAMSRPLIHFGNDYEDRYYRENMYRYPNQVYYRPVDQYSNQNNFVHDCVNITIKQHTVTTTTKGENFTETDVKMMERVVEQMCITQYEKESQAYYQRGSSMVLFSSPPVILLISFLIFLIVG.

The signal sequence occupies residues 1–15 (MLVLFVATWSDLGLC). The tract at residues 16 to 215 (KKRPKPGGWN…ESQAYYQRGS (200 aa)) is interaction with GRB2, ERI3 and SYN1. A disordered region spans residues 18–93 (RPKPGGWNTG…WHKPSKPKTS (76 aa)). 4 consecutive repeat copies span residues 44-52 (PQGGGGWGQ), 53-60 (PHGGGWGQ), 61-68 (PHGGGWGQ), and 69-76 (PHGGGWGQ). Residues 44-76 (PQGGGGWGQPHGGGWGQPHGGGWGQPHGGGWGQ) form a 4 X 8 AA tandem repeats of P-H-G-G-G-W-G-Q region. Over residues 45–80 (QGGGGWGQPHGGGWGQPHGGGWGQPHGGGWGQGGGT) the composition is skewed to gly residues. Cu(2+)-binding residues include Gly47, Gly48, His54, Gly55, Gly56, His62, Gly63, Gly64, His70, Gly71, and Gly72. Residues 83–93 (QWHKPSKPKTS) show a composition bias toward basic residues. A disulfide bridge connects residues Cys164 and Cys199. Asn166 and Asn182 each carry an N-linked (GlcNAc...) asparagine glycan. Ser215 carries GPI-anchor amidated serine lipidation. Residues 216 to 238 (SMVLFSSPPVILLISFLIFLIVG) constitute a propeptide, removed in mature form.

The protein belongs to the prion family. Monomer and homodimer. Has a tendency to aggregate into amyloid fibrils containing a cross-beta spine, formed by a steric zipper of superposed beta-strands. Soluble oligomers may represent an intermediate stage on the path to fibril formation. Copper binding may promote oligomerization. Interacts with GRB2, APP, ERI3/PRNPIP and SYN1. Mislocalized cytosolically exposed PrP interacts with MGRN1; this interaction alters MGRN1 subcellular location and causes lysosomal enlargement. Interacts with KIAA1191.

The protein localises to the cell membrane. It localises to the golgi apparatus. In terms of biological role, its primary physiological function is unclear. Has cytoprotective activity against internal or environmental stresses. May play a role in neuronal development and synaptic plasticity. May be required for neuronal myelin sheath maintenance. May play a role in iron uptake and iron homeostasis. Soluble oligomers are toxic to cultured neuroblastoma cells and induce apoptosis (in vitro). Association with GPC1 (via its heparan sulfate chains) targets PRNP to lipid rafts. Also provides Cu(2+) or Zn(2+) for the ascorbate-mediated GPC1 deaminase degradation of its heparan sulfate side chains. In Macaca sylvanus (Barbary macaque), this protein is Major prion protein (PRNP).